A 292-amino-acid chain; its full sequence is 4-hydroxy-tetrahydrodipicolinate synthase (292 aa).

Thr45 is a binding site for pyruvate. Catalysis depends on Tyr133, which acts as the Proton donor/acceptor. Catalysis depends on Lys161, which acts as the Schiff-base intermediate with substrate. Position 203 (Ile203) interacts with pyruvate.

The protein belongs to the DapA family. As to quaternary structure, homotetramer; dimer of dimers.

It is found in the cytoplasm. It carries out the reaction L-aspartate 4-semialdehyde + pyruvate = (2S,4S)-4-hydroxy-2,3,4,5-tetrahydrodipicolinate + H2O + H(+). It participates in amino-acid biosynthesis; L-lysine biosynthesis via DAP pathway; (S)-tetrahydrodipicolinate from L-aspartate: step 3/4. In terms of biological role, catalyzes the condensation of (S)-aspartate-beta-semialdehyde [(S)-ASA] and pyruvate to 4-hydroxy-tetrahydrodipicolinate (HTPA). This is 4-hydroxy-tetrahydrodipicolinate synthase from Shigella boydii serotype 18 (strain CDC 3083-94 / BS512).